Consider the following 459-residue polypeptide: ATP synthase subunit beta (459 aa).

Position 148–155 (148–155 (GGAGVGKT)) interacts with ATP.

The protein belongs to the ATPase alpha/beta chains family. In terms of assembly, F-type ATPases have 2 components, CF(1) - the catalytic core - and CF(0) - the membrane proton channel. CF(1) has five subunits: alpha(3), beta(3), gamma(1), delta(1), epsilon(1). CF(0) has three main subunits: a(1), b(2) and c(9-12). The alpha and beta chains form an alternating ring which encloses part of the gamma chain. CF(1) is attached to CF(0) by a central stalk formed by the gamma and epsilon chains, while a peripheral stalk is formed by the delta and b chains.

The protein localises to the cell inner membrane. It carries out the reaction ATP + H2O + 4 H(+)(in) = ADP + phosphate + 5 H(+)(out). Its function is as follows. Produces ATP from ADP in the presence of a proton gradient across the membrane. The catalytic sites are hosted primarily by the beta subunits. This chain is ATP synthase subunit beta, found in Vesicomyosocius okutanii subsp. Calyptogena okutanii (strain HA).